Reading from the N-terminus, the 493-residue chain is Keratin, type II cuticular Hb3 (493 aa).

Positions 1–111 (MTCGFSTVGS…PNAQCVKQEE (111 aa)) are head. The IF rod domain maps to 111–422 (EKEQIKCLNN…RLLEGEEQRL (312 aa)). The coil 1A stretch occupies residues 112–146 (KEQIKCLNNRFAAFIDKVRFLEQQNKLLETKLQFY). Residues 147 to 156 (QNRQCCESNL) form a linker 1 region. The interval 157–257 (EPLFEGYIET…YEEEIRVLQA (101 aa)) is coil 1B. Residue Lys-217 forms a Glycyl lysine isopeptide (Lys-Gly) (interchain with G-Cter in SUMO1) linkage. The interval 258-274 (NISDTSVIVKMDNSRGL) is linker 12. The coil 2 stretch occupies residues 275 to 418 (NMDNIVAEIK…ATYRRLLEGE (144 aa)). The tract at residues 419–493 (EQRLCEGVGA…GGGSCSLGRC (75 aa)) is tail.

It belongs to the intermediate filament family. Heterotetramer of two type I and two type II keratins.

The protein is Keratin, type II cuticular Hb3 of Bos taurus (Bovine).